The chain runs to 195 residues: Probable nicotinate-nucleotide adenylyltransferase (195 aa).

It belongs to the NadD family.

The enzyme catalyses nicotinate beta-D-ribonucleotide + ATP + H(+) = deamido-NAD(+) + diphosphate. It participates in cofactor biosynthesis; NAD(+) biosynthesis; deamido-NAD(+) from nicotinate D-ribonucleotide: step 1/1. In terms of biological role, catalyzes the reversible adenylation of nicotinate mononucleotide (NaMN) to nicotinic acid adenine dinucleotide (NaAD). The polypeptide is Probable nicotinate-nucleotide adenylyltransferase (Salinibacter ruber (strain DSM 13855 / M31)).